Reading from the N-terminus, the 352-residue chain is N-terminal EF-hand calcium-binding protein 1 (352 aa).

Serine 4 is modified (phosphoserine). EF-hand domains follow at residues 26–61 and 60–95; these read KGMS…GVLS and LSGE…HLGE. Ca(2+) contacts are provided by aspartate 39, asparagine 41, aspartate 43, lysine 45, and glutamate 50. The stretch at 135-163 forms a coiled coil; the sequence is LLKETLNQLQSLQNSLECAMETTEEQTRQ. Residues 180 to 202 are disordered; that stretch reads GKRSSRRVQRHNSFSPNSPQFNV. A compositionally biased stretch (polar residues) spans 190–202; that stretch reads HNSFSPNSPQFNV. Serine 192 and serine 197 each carry phosphoserine. Positions 209 to 275 form a coiled coil; the sequence is EEDNQWMTQI…EEFQLALKHY (67 aa). The ABM domain maps to 252-340; the sequence is MLVQRQMSVI…LETPELTSTM (89 aa).

Interacts with STX1. May interact with CPNE6.

It is found in the cytoplasm. The polypeptide is N-terminal EF-hand calcium-binding protein 1 (NECAB1) (Pongo abelii (Sumatran orangutan)).